Reading from the N-terminus, the 124-residue chain is SPbeta prophage-derived uncharacterized protein YoqO (124 aa).

Helical transmembrane passes span 54–74 and 88–108; these read LVVI…LLSF and VIFI…ISIM.

Its subcellular location is the cell membrane. This is SPbeta prophage-derived uncharacterized protein YoqO (yoqO) from Bacillus subtilis (strain 168).